We begin with the raw amino-acid sequence, 409 residues long: Peptide chain release factor subunit 1 (409 aa).

The protein belongs to the eukaryotic release factor 1 family. As to quaternary structure, heterodimer of two subunits, one of which binds GTP.

The protein localises to the cytoplasm. Functionally, directs the termination of nascent peptide synthesis (translation) in response to the termination codons UAA, UAG and UGA. The sequence is that of Peptide chain release factor subunit 1 from Methanopyrus kandleri (strain AV19 / DSM 6324 / JCM 9639 / NBRC 100938).